Reading from the N-terminus, the 214-residue chain is Uracil phosphoribosyltransferase (214 aa).

Residues R81, R106, and 133–141 each bind 5-phospho-alpha-D-ribose 1-diphosphate; that span reads DPMLATGNS. Uracil-binding positions include I196 and 201 to 203; that span reads GDA. D202 serves as a coordination point for 5-phospho-alpha-D-ribose 1-diphosphate.

Belongs to the UPRTase family. Mg(2+) is required as a cofactor.

The catalysed reaction is UMP + diphosphate = 5-phospho-alpha-D-ribose 1-diphosphate + uracil. Its pathway is pyrimidine metabolism; UMP biosynthesis via salvage pathway; UMP from uracil: step 1/1. Allosterically activated by GTP. In terms of biological role, catalyzes the conversion of uracil and 5-phospho-alpha-D-ribose 1-diphosphate (PRPP) to UMP and diphosphate. The sequence is that of Uracil phosphoribosyltransferase from Legionella pneumophila subsp. pneumophila (strain Philadelphia 1 / ATCC 33152 / DSM 7513).